The chain runs to 682 residues: ATP-dependent DNA helicase RecG (682 aa).

The interval 46 to 139 (ELRDLEEVKH…LKNGPHQEDK (94 aa)) is wedge domain. One can recognise a Helicase ATP-binding domain in the interval 271-432 (DMSSPYRMNR…VFGEMDVSVI (162 aa)). ATP is bound at residue 284–291 (GDVGSGKT). Positions 385–388 (DEQH) match the DEAH box motif. The Helicase C-terminal domain maps to 451-611 (MLDRILAFVE…GFELSEKDLE (161 aa)).

It belongs to the helicase family. RecG subfamily. Monomer. Interacts with SSB (sbbA), via the latter's 6 C-terminal residues. Colocalizes with DNA pol III subunit gamma/tau (dnaX).

The protein localises to the cytoplasm. It is found in the nucleoid. It catalyses the reaction Couples ATP hydrolysis with the unwinding of duplex DNA by translocating in the 3'-5' direction.. The enzyme catalyses ATP + H2O = ADP + phosphate + H(+). Replication fork regression on Holliday junctions (HJ) is inhibited by DisA; DisA inhibits the ATPase activity of RecG. Its function is as follows. Critical role in recombination and DNA repair. Helps process Holliday junction intermediates to mature products by catalyzing branch migration. Has a DNA unwinding activity characteristic of a DNA helicase with 3'-5' polarity. Unwinds branched duplex DNA (Y-DNA), Holliday junction (HJ) DNA and partially replicated forks as well as catalyzing fork reversal/regression. Does not seem to unwind R-loops. Inhibits the diadenylate cyclase (DAC) activity of DisA in the presence but not absence of HJ DNA, possibly by relocating DisA from the junction. The chain is ATP-dependent DNA helicase RecG from Bacillus subtilis (strain 168).